Reading from the N-terminus, the 102-residue chain is PE family immunomodulator PE5 (102 aa).

Residues leucine 3 to alanine 92 enclose the PE domain.

The protein belongs to the mycobacterial PE family.

It is found in the secreted. The protein resides in the cell envelope. It localises to the cell surface. Its function is as follows. Important for the siderophore-mediated iron-acquisition function of ESX-3. May play a pivotal role in the evasion of host immune response by M.tuberculosis. Mediates production of IL-10 via activation of the p38 and ERK1/2 mitogen-activated protein kinase (MAPK) signaling pathways. In Mycobacterium tuberculosis (strain ATCC 25618 / H37Rv), this protein is PE family immunomodulator PE5.